The primary structure comprises 228 residues: PKHD-type hydroxylase Reut_A2877 (228 aa).

Residues 80–180 (IVYPPMFNRY…RVASFFWIQS (101 aa)) enclose the Fe2OG dioxygenase domain. 3 residues coordinate Fe cation: H98, D100, and H161. A 2-oxoglutarate-binding site is contributed by R171.

The cofactor is Fe(2+). It depends on L-ascorbate as a cofactor.

This Cupriavidus pinatubonensis (strain JMP 134 / LMG 1197) (Cupriavidus necator (strain JMP 134)) protein is PKHD-type hydroxylase Reut_A2877.